Here is a 136-residue protein sequence, read N- to C-terminus: Large ribosomal subunit protein bL17 (136 aa).

This sequence belongs to the bacterial ribosomal protein bL17 family. Part of the 50S ribosomal subunit. Contacts protein L32.

The protein is Large ribosomal subunit protein bL17 of Rhodopseudomonas palustris (strain BisA53).